Consider the following 847-residue polypeptide: Follistatin-related protein 5 (847 aa).

An N-terminal signal peptide occupies residues 1–20; it reads MFKCWSVVLVLGFIFLESEG. In terms of domain architecture, Kazal-like spans 83-135; sequence GQAECACMDLCKRHYKPVCGSDGEFYENHCEVHRAACLKKQKITIVHNEDCFF. 3 disulfide bridges follow: cysteine 89–cysteine 119, cysteine 93–cysteine 112, and cysteine 101–cysteine 133. 2 EF-hand domains span residues 175–210 and 211–246; these read RKKL…EELG and KDLF…QVIQ. Ca(2+)-binding residues include aspartate 188, aspartate 190, asparagine 192, glutamate 199, aspartate 226, asparagine 228, aspartate 230, histidine 232, and glutamate 237. Ig-like domains follow at residues 250-337 and 341-426; these read PEDQ…IFQV and PVIR…EDIS. 2 disulfides stabilise this stretch: cysteine 270–cysteine 321 and cysteine 362–cysteine 413. N-linked (GlcNAc...) asparagine glycosylation is found at asparagine 318 and asparagine 394.

Its subcellular location is the secreted. The chain is Follistatin-related protein 5 (FSTL5) from Homo sapiens (Human).